A 126-amino-acid polypeptide reads, in one-letter code: Profilin-1A (126 aa).

Positions 2-36 (SWQTYVDTNLVGTGAVTQAAILGLDGNTWATSAGF) are actin binding. Lys104 carries the post-translational modification N6,N6,N6-trimethyllysine.

It belongs to the profilin family. In terms of assembly, occurs in many kinds of cells as a complex with monomeric actin in a 1:1 ratio.

Its subcellular location is the cytoplasm. The protein resides in the cytoskeleton. In terms of biological role, binds to actin and affects the structure of the cytoskeleton. At high concentrations, profilin prevents the polymerization of actin, whereas it enhances it at low concentrations. By binding to PIP2, it inhibits the formation of IP3 and DG. In Acanthamoeba castellanii (Amoeba), this protein is Profilin-1A.